The following is a 315-amino-acid chain: L-lactate dehydrogenase (315 aa).

Residues V17, D38, K43, Y69, and 83–84 each bind NAD(+); that span reads GA. Residues Q86 and R92 each contribute to the substrate site. Residues S105, 122–124, and S147 each bind NAD(+); that span reads ATN. 124–127 contributes to the substrate binding site; that stretch reads NPVD. Residue 152 to 155 participates in substrate binding; it reads DTAR. Beta-D-fructose 1,6-bisphosphate is bound by residues R157 and H172. H179 acts as the Proton acceptor in catalysis. Y223 carries the post-translational modification Phosphotyrosine. T232 is a binding site for substrate.

This sequence belongs to the LDH/MDH superfamily. LDH family. In terms of assembly, homotetramer.

It is found in the cytoplasm. It carries out the reaction (S)-lactate + NAD(+) = pyruvate + NADH + H(+). The protein operates within fermentation; pyruvate fermentation to lactate; (S)-lactate from pyruvate: step 1/1. Allosterically activated by fructose 1,6-bisphosphate (FBP). Its function is as follows. Catalyzes the conversion of lactate to pyruvate. This is L-lactate dehydrogenase from Macrococcus caseolyticus (strain JCSC5402) (Macrococcoides caseolyticum).